A 322-amino-acid polypeptide reads, in one-letter code: Ribosomal RNA small subunit methyltransferase H (322 aa).

S-adenosyl-L-methionine-binding positions include 42–44, Asp-62, Phe-86, Asp-107, and Gln-114; that span reads GGH.

It belongs to the methyltransferase superfamily. RsmH family.

The protein resides in the cytoplasm. The enzyme catalyses cytidine(1402) in 16S rRNA + S-adenosyl-L-methionine = N(4)-methylcytidine(1402) in 16S rRNA + S-adenosyl-L-homocysteine + H(+). In terms of biological role, specifically methylates the N4 position of cytidine in position 1402 (C1402) of 16S rRNA. The polypeptide is Ribosomal RNA small subunit methyltransferase H (Janthinobacterium sp. (strain Marseille) (Minibacterium massiliensis)).